The following is an 86-amino-acid chain: Large ribosomal subunit protein bL27 (86 aa).

Residues 1 to 26 (MATKKAGGSSRNGRDSAGRRLGVKQS) are disordered.

It belongs to the bacterial ribosomal protein bL27 family.

The chain is Large ribosomal subunit protein bL27 from Rickettsia canadensis (strain McKiel).